The primary structure comprises 82 residues: Large ribosomal subunit protein bL28 (82 aa).

Residues 1–25 (MAKVDQITKKRAMTGNTRSHALNHS) form a disordered region.

It belongs to the bacterial ribosomal protein bL28 family.

The sequence is that of Large ribosomal subunit protein bL28 from Malacoplasma penetrans (strain HF-2) (Mycoplasma penetrans).